We begin with the raw amino-acid sequence, 198 residues long: Holliday junction branch migration complex subunit RuvA (198 aa).

The interval 1–63 is domain I; that stretch reads MIAYLSGAVR…EDAQLLFGFL (63 aa). The domain II stretch occupies residues 64–142; the sequence is DTDSLRLFDL…EHLAAGAPVS (79 aa). A flexible linker region spans residues 143–150; that stretch reads AGKAALTS. Residues 150–198 form a domain III region; that stretch reads STAGRDAIEALLALGFREPQVRSVVAELLAADPEQSADALIRKGLGKLR.

This sequence belongs to the RuvA family. As to quaternary structure, homotetramer. Forms an RuvA(8)-RuvB(12)-Holliday junction (HJ) complex. HJ DNA is sandwiched between 2 RuvA tetramers; dsDNA enters through RuvA and exits via RuvB. An RuvB hexamer assembles on each DNA strand where it exits the tetramer. Each RuvB hexamer is contacted by two RuvA subunits (via domain III) on 2 adjacent RuvB subunits; this complex drives branch migration. In the full resolvosome a probable DNA-RuvA(4)-RuvB(12)-RuvC(2) complex forms which resolves the HJ.

The protein localises to the cytoplasm. Its function is as follows. The RuvA-RuvB-RuvC complex processes Holliday junction (HJ) DNA during genetic recombination and DNA repair, while the RuvA-RuvB complex plays an important role in the rescue of blocked DNA replication forks via replication fork reversal (RFR). RuvA specifically binds to HJ cruciform DNA, conferring on it an open structure. The RuvB hexamer acts as an ATP-dependent pump, pulling dsDNA into and through the RuvAB complex. HJ branch migration allows RuvC to scan DNA until it finds its consensus sequence, where it cleaves and resolves the cruciform DNA. In Deinococcus geothermalis (strain DSM 11300 / CIP 105573 / AG-3a), this protein is Holliday junction branch migration complex subunit RuvA.